The following is an 888-amino-acid chain: Phosphoenolpyruvate carboxylase (888 aa).

Active-site residues include H144 and K553.

It belongs to the PEPCase type 1 family. It depends on Mg(2+) as a cofactor.

The catalysed reaction is oxaloacetate + phosphate = phosphoenolpyruvate + hydrogencarbonate. Its function is as follows. Forms oxaloacetate, a four-carbon dicarboxylic acid source for the tricarboxylic acid cycle. This chain is Phosphoenolpyruvate carboxylase, found in Alcanivorax borkumensis (strain ATCC 700651 / DSM 11573 / NCIMB 13689 / SK2).